The primary structure comprises 1347 residues: BTB/POZ domain-containing protein 1 (1347 aa).

2 ANK repeats span residues 51–81 (YGRT…DVFV) and 86–115 (SGYT…SFRS). RCC1 repeat units follow at residues 148–198 (GNEL…DKIL), 215–264 (SQNV…ALTK), 265–322 (FGSI…AWTD), and 324–372 (DIYS…CLLQ). BTB domains follow at residues 619-698 (SDVT…LSPW) and 758-829 (MDTV…VELF). Disordered stretches follow at residues 1006 to 1029 (SSNQ…NVVN), 1104 to 1139 (EKAD…SKQV), 1193 to 1237 (EGSS…PLSI), and 1286 to 1347 (GILK…RAVK). Basic and acidic residues predominate over residues 1013–1023 (LNKEDAEEKSP). Composition is skewed to polar residues over residues 1208 to 1237 (SNGS…PLSI) and 1297 to 1306 (NRKQGQASKQ). The segment covering 1336–1347 (TTHKKGKARAVK) has biased composition (basic residues).

Interacts with cul3.

Its pathway is protein modification; protein ubiquitination. Probable substrate-specific adapter of an E3 ubiquitin-protein ligase complex which mediates the ubiquitination and subsequent proteasomal degradation of target proteins. The polypeptide is BTB/POZ domain-containing protein 1 (btb1) (Schizosaccharomyces pombe (strain 972 / ATCC 24843) (Fission yeast)).